The following is a 236-amino-acid chain: Segregation and condensation protein A (236 aa).

Belongs to the ScpA family. As to quaternary structure, component of a cohesin-like complex composed of ScpA, ScpB and the Smc homodimer, in which ScpA and ScpB bind to the head domain of Smc. The presence of the three proteins is required for the association of the complex with DNA.

It is found in the cytoplasm. Its function is as follows. Participates in chromosomal partition during cell division. May act via the formation of a condensin-like complex containing Smc and ScpB that pull DNA away from mid-cell into both cell halves. This is Segregation and condensation protein A from Streptococcus sanguinis (strain SK36).